The sequence spans 1072 residues: Serine/threonine-protein kinase 11-interacting protein (1072 aa).

LRR repeat units follow at residues S109 to Y130, Q132 to C152, A164 to L185, A187 to C209, E210 to G231, A233 to K254, N255 to W276, and E280 to T301. The tract at residues D333–S366 is disordered. Residues S388, S390, and S393 each carry the phosphoserine modification. Positions M441–L454 are enriched in polar residues. Disordered stretches follow at residues M441–A522 and R741–P762. Basic and acidic residues-rich tracts occupy residues K478 to P492 and E501 to E510. A phosphoserine mark is found at S757, S761, and S763. The disordered stretch occupies residues H967–Q993.

The protein belongs to the STK11IP family. In terms of assembly, found in a ternary complex composed of STK11/LKB1, STK11IP and SMAD4. Interacts with SMAD4. Interacts with STK11/LKB1.

The protein localises to the cytoplasm. In terms of biological role, may regulate STK11/LKB1 function by controlling its subcellular localization. The chain is Serine/threonine-protein kinase 11-interacting protein (Stk11ip) from Mus musculus (Mouse).